A 692-amino-acid chain; its full sequence is Elongation factor G (692 aa).

Residues glutamate 8–leucine 282 form the tr-type G domain. Residues alanine 17–threonine 24, aspartate 81–histidine 85, and asparagine 135–aspartate 138 each bind GTP.

The protein belongs to the TRAFAC class translation factor GTPase superfamily. Classic translation factor GTPase family. EF-G/EF-2 subfamily.

It is found in the cytoplasm. Its function is as follows. Catalyzes the GTP-dependent ribosomal translocation step during translation elongation. During this step, the ribosome changes from the pre-translocational (PRE) to the post-translocational (POST) state as the newly formed A-site-bound peptidyl-tRNA and P-site-bound deacylated tRNA move to the P and E sites, respectively. Catalyzes the coordinated movement of the two tRNA molecules, the mRNA and conformational changes in the ribosome. The protein is Elongation factor G of Bacillus cereus (strain Q1).